The primary structure comprises 291 residues: START domain-containing protein 10 (291 aa).

Met1 is subject to N-acetylmethionine. Residues 1 to 23 (MEKPAASTEPQGSRPALGRESVQ) form a disordered region. Residues 14–224 (RPALGRESVQ…MYKACIKYPE (211 aa)) form the START domain. Residues Lys94, Lys197, and Lys202 each carry the N6-succinyllysine modification. Phosphoserine is present on residues Ser253, Ser259, Ser284, and Ser289. Residues 260–291 (LENIDESAVTESREERAGGAGGEGSDDDTSLT) are disordered.

Post-translationally, phosphorylation at Ser-284 by CK2 negatively regulates lipid transfer activity, possibly by decreasing membrane association. Testis, kidney, liver, and intestine with the highest level in the testis.

It localises to the cell projection. It is found in the cilium. Its subcellular location is the flagellum. The protein resides in the cytoplasm. The protein localises to the membrane. In terms of biological role, phospholipid transfer protein that preferentially selects lipid species containing a palmitoyl or stearoyl chain on the sn-1 and an unsaturated fatty acyl chain (18:1 or 18:2) on the sn-2 position. Able to transfer phosphatidylcholine (PC) and phosphatidyetanolamline (PE) between membranes. May play metabolic roles in sperm maturation or fertilization. This Mus musculus (Mouse) protein is START domain-containing protein 10 (Stard10).